Consider the following 234-residue polypeptide: Peptidyl-prolyl cis-trans isomerase FKBP17-3, chloroplastic (234 aa).

A chloroplast-targeting transit peptide spans 1 to 28 (MATLFTATVPSHHRFVSPSQHPKQSLLS). One can recognise a PPIase FKBP-type domain in the interval 130–228 (GYLVVFDVKG…DYIIEVDTVY (99 aa)).

It belongs to the FKBP-type PPIase family.

The protein localises to the plastid. It localises to the chloroplast thylakoid lumen. The catalysed reaction is [protein]-peptidylproline (omega=180) = [protein]-peptidylproline (omega=0). In terms of biological role, PPIases accelerate the folding of proteins. It catalyzes the cis-trans isomerization of proline imidic peptide bonds in oligopeptides. The sequence is that of Peptidyl-prolyl cis-trans isomerase FKBP17-3, chloroplastic (FKBP17-3) from Arabidopsis thaliana (Mouse-ear cress).